The chain runs to 155 residues: Crossover junction endodeoxyribonuclease RuvC (155 aa).

Residues Asp7, Glu68, and Asp140 contribute to the active site. Asp7, Glu68, and Asp140 together coordinate Mg(2+).

Belongs to the RuvC family. Homodimer which binds Holliday junction (HJ) DNA. The HJ becomes 2-fold symmetrical on binding to RuvC with unstacked arms; it has a different conformation from HJ DNA in complex with RuvA. In the full resolvosome a probable DNA-RuvA(4)-RuvB(12)-RuvC(2) complex forms which resolves the HJ. Mg(2+) serves as cofactor.

It is found in the cytoplasm. The enzyme catalyses Endonucleolytic cleavage at a junction such as a reciprocal single-stranded crossover between two homologous DNA duplexes (Holliday junction).. Functionally, the RuvA-RuvB-RuvC complex processes Holliday junction (HJ) DNA during genetic recombination and DNA repair. Endonuclease that resolves HJ intermediates. Cleaves cruciform DNA by making single-stranded nicks across the HJ at symmetrical positions within the homologous arms, yielding a 5'-phosphate and a 3'-hydroxyl group; requires a central core of homology in the junction. The consensus cleavage sequence is 5'-(A/T)TT(C/G)-3'. Cleavage occurs on the 3'-side of the TT dinucleotide at the point of strand exchange. HJ branch migration catalyzed by RuvA-RuvB allows RuvC to scan DNA until it finds its consensus sequence, where it cleaves and resolves the cruciform DNA. The chain is Crossover junction endodeoxyribonuclease RuvC from Prochlorococcus marinus (strain SARG / CCMP1375 / SS120).